A 622-amino-acid polypeptide reads, in one-letter code: Low affinity potassium transport system protein Kup (622 aa).

The next 12 helical transmembrane spans lie at 12–32, 49–69, 101–121, 134–154, 163–183, 213–233, 247–267, 276–296, 337–357, 363–383, 395–415, and 419–439; these read ITLA…LYTL, VFGF…LKYL, FLVI…VITP, IIAP…LTLL, GLVG…LAAL, VSFV…ALYA, WFTV…ALLL, PFFL…ATLA, IYIP…IVSF, LAAA…ILST, FLVA…FSAN, and IVSG…VMTT.

Belongs to the HAK/KUP transporter (TC 2.A.72) family.

The protein resides in the cell inner membrane. The enzyme catalyses K(+)(in) + H(+)(in) = K(+)(out) + H(+)(out). Functionally, responsible for the low-affinity transport of potassium into the cell. Likely operates as a K(+):H(+) symporter. This Enterobacter sp. (strain 638) protein is Low affinity potassium transport system protein Kup.